The primary structure comprises 450 residues: Adenosylhomocysteinase (450 aa).

Residues T59, D135, and E160 each coordinate substrate. NAD(+) is bound at residue T161–T163. Residues K190 and D194 each contribute to the substrate site. NAD(+) contacts are provided by residues N195, G224–G229, E247, I303–H305, and N350.

Belongs to the adenosylhomocysteinase family. It depends on NAD(+) as a cofactor.

It localises to the cytoplasm. It catalyses the reaction S-adenosyl-L-homocysteine + H2O = L-homocysteine + adenosine. It participates in amino-acid biosynthesis; L-homocysteine biosynthesis; L-homocysteine from S-adenosyl-L-homocysteine: step 1/1. Functionally, adenosylhomocysteine is a competitive inhibitor of S-adenosyl-L-methionine-dependent methyl transferase reactions; therefore adenosylhomocysteinase may play a key role in the control of methylations via regulation of the intracellular concentration of adenosylhomocysteine. In Candida albicans (strain SC5314 / ATCC MYA-2876) (Yeast), this protein is Adenosylhomocysteinase (SAH1).